The sequence spans 38 residues: Turripeptide GpIAa (38 aa).

This sequence belongs to the turripeptide family. Expressed by the venom duct.

The protein localises to the secreted. The sequence is that of Turripeptide GpIAa from Cryptogemma periscelida (Atlantic gem-turris).